Reading from the N-terminus, the 642-residue chain is MPIITLPDGSQRHFDNPVSTLEVAQSIGPGLAKATIAGRVNGARVDACDLIEHDASLEIITTKDEVDGLEIVRHSCAHLLGHALKQLYPNAKMAIGPTIDSGFYYDIDLEQSLSQEDLEKIEARMVELAKTKYAVVKKKVSWQEARDTFESRGESYKMEILDENVARDDRPGLYHHEEYIDMCRGPHVPHMGFCQNFKLLNIAGAYWRGNSDNKMLQRIYGTAFHDKKALQAHLTRLEEAAKRDHRKIGKQLDLFHMQQEAPGMVFWHHNGWSVFRELEIFIRHKLNEYGYQEVKGPLMMDRVLWERSGHWDKYADAMFTTSSENREYAIKPMNCPGHIQIFNQGLKSYRDLPLRMAEFGSCHRNEPSGSLHGIMRVRGFTQDDAHIFCTEDQIQQEVTSCIKMVYDTYTTFGFQNIVVKLSTRPEKRVGSDEIWDKSEQALIDSLKAMDIPFEIQEGEGAFYGPKIEFTLYDCLDRAWQCGTVQLDFNLPTRLGATYVGESNERLIPVMIHRAILGSLERFIGILIEEYAGFFPTWLAPEQAVVVNITDKQADYAHEVAQKLQKCGIRAKADLRNEKIGFKIREHTLKRVPYMLVCGDQEMEAGEIAVRTRKGKDLGKFKLDDFIAHIQAEIASRKLNLEE.

Residues 1 to 61 (MPIITLPDGS…EHDASLEIIT (61 aa)) form the TGS domain. Residues 244–535 (DHRKIGKQLD…LIEEYAGFFP (292 aa)) form a catalytic region. 3 residues coordinate Zn(2+): C335, H386, and H512.

It belongs to the class-II aminoacyl-tRNA synthetase family. As to quaternary structure, homodimer. Zn(2+) is required as a cofactor.

It localises to the cytoplasm. It carries out the reaction tRNA(Thr) + L-threonine + ATP = L-threonyl-tRNA(Thr) + AMP + diphosphate + H(+). Functionally, catalyzes the attachment of threonine to tRNA(Thr) in a two-step reaction: L-threonine is first activated by ATP to form Thr-AMP and then transferred to the acceptor end of tRNA(Thr). Also edits incorrectly charged L-seryl-tRNA(Thr). This chain is Threonine--tRNA ligase, found in Vibrio cholerae serotype O1 (strain ATCC 39541 / Classical Ogawa 395 / O395).